The chain runs to 691 residues: Choline transporter-like 1 (691 aa).

Residues 1–10 (MGCAESKDGE) show a composition bias toward basic and acidic residues. Residues 1 to 20 (MGCAESKDGEGEAQNNRPKY) form a disordered region. A run of 3 helical transmembrane segments spans residues 28-48 (WLAI…FSFV), 205-225 (WHII…LVTM), and 232-252 (IVSW…TVAL). N261 carries N-linked (GlcNAc...) asparagine glycosylation. 2 consecutive transmembrane segments (helical) span residues 282 to 302 (VLTL…VIYF) and 332 to 352 (LLAF…IICL). N385 carries N-linked (GlcNAc...) asparagine glycosylation. Transmembrane regions (helical) follow at residues 408 to 428 (SMFW…FACQ), 527 to 547 (VVAI…NAMA), 562 to 582 (FILF…GIVL), and 591 to 611 (FYMA…HIIL).

It belongs to the CTL (choline transporter-like) family.

The protein localises to the membrane. This is Choline transporter-like 1 from Drosophila melanogaster (Fruit fly).